The chain runs to 192 residues: Adenylate kinase (192 aa).

10-18 (GVPGVGGTT) is an ATP binding site.

It belongs to the archaeal adenylate kinase family. As to quaternary structure, monomer.

It localises to the cytoplasm. The catalysed reaction is AMP + ATP = 2 ADP. The chain is Adenylate kinase from Methanococcus maripaludis (strain C7 / ATCC BAA-1331).